Here is a 146-residue protein sequence, read N- to C-terminus: Large ribosomal subunit protein uL15 (146 aa).

Over residues 1 to 13 the composition is skewed to basic and acidic residues; that stretch reads MKLHELKAAEGSR. Residues 1–56 form a disordered region; sequence MKLHELKAAEGSRRVRNRVGRGAATGNGKTSGRGQKGQKARSGGKLRPGFEGGQLP. Gly residues predominate over residues 23 to 35; that stretch reads AATGNGKTSGRGQ.

This sequence belongs to the universal ribosomal protein uL15 family. As to quaternary structure, part of the 50S ribosomal subunit.

Binds to the 23S rRNA. The sequence is that of Large ribosomal subunit protein uL15 from Staphylococcus epidermidis (strain ATCC 35984 / DSM 28319 / BCRC 17069 / CCUG 31568 / BM 3577 / RP62A).